The sequence spans 169 residues: Type II secretion system protein H (169 aa).

A propeptide spans 1 to 29 (MRVARLPLLHPHRAAPVVRRQLRGSSLLE) (leader sequence). M30 bears the N-methylmethionine mark. Residues 32-52 (LVIALIALAGVLAAAALTGGI) traverse the membrane as a helical segment.

The protein belongs to the GSP H family. Type II secretion is composed of four main components: the outer membrane complex, the inner membrane complex, the cytoplasmic secretion ATPase and the periplasm-spanning pseudopilus. Interacts with core component XpsG. Interacts with minor pseudopilins XpsI and XpsJ. Cleaved by prepilin peptidase. In terms of processing, methylated by prepilin peptidase at the amino group of the N-terminal phenylalanine once the leader sequence is cleaved by prepilin peptidase.

The protein localises to the cell inner membrane. Component of the type II secretion system required for the energy-dependent secretion of extracellular factors such as proteases and toxins from the periplasm. Part of the pseudopilus tip complex that is critical for the recognition and binding of secretion substrates. The sequence is that of Type II secretion system protein H (xpsH) from Xanthomonas campestris pv. campestris (strain ATCC 33913 / DSM 3586 / NCPPB 528 / LMG 568 / P 25).